Reading from the N-terminus, the 482-residue chain is Auxin transporter-like protein 2 (482 aa).

The Cytoplasmic portion of the chain corresponds to 1–58 (MVPAGDQAEEAIVADAGKEEAEVRAAMGVEQDGKFSMTSLLWHGGSVWDAWFSCASNQ). A helical membrane pass occupies residues 59 to 76 (VAQVLLTLPYSFSQLGML). Topologically, residues 77-78 (SG) are extracellular. A helical transmembrane segment spans residues 79–99 (LLLQVFYGLMGSWTAYLISVL). Over 100-134 (YVEYRARKEKEGVSFKNHVIQWFEVLDGLLGPYWK) the chain is Cytoplasmic. The helical transmembrane segment at 135-155 (AAGLAFNCTFLLFGSVIQLIA) threads the bilayer. At 156–171 (CASNIYYINDRLDKRT) the chain is on the extracellular side. A helical membrane pass occupies residues 172–192 (WTYIFGACCSTTVFIPSFHNY). Arg193 is a topological domain (cytoplasmic). The helical transmembrane segment at 194–214 (IWSFLGLGMTTYTAWYLAIAA) threads the bilayer. Residues 215-231 (AVHGQVDGVTHSGPSKM) are Extracellular-facing. A helical transmembrane segment spans residues 232–252 (VLYFTGATNILYTFGGHAVTV). Residues 253-265 (EIMHAMWKPQKFK) lie on the Cytoplasmic side of the membrane. The helical transmembrane segment at 266–286 (YIYLVATLYVFTLTLPSASAM) threads the bilayer. At 287-313 (YWAFGDALLTHSNAFSLLPRSGWRDAA) the chain is on the extracellular side. Residues 314–334 (VILMLIHQFITFGFACTPLYF) form a helical membrane-spanning segment. Residues 335–355 (VWEKAIGMHGTRSVLTRALAR) are Cytoplasmic-facing. Residues 356-376 (LPIVVPIWFLAIIFPFFGPIN) form a helical membrane-spanning segment. Position 377 (Ser377) is a topological domain, extracellular. Residues 378-398 (AVGALLVSFTVYIIPSLSHIL) form a helical membrane-spanning segment. Residues 399-423 (TYRSASARLNAAEKPPPFLPSWSGM) lie on the Cytoplasmic side of the membrane. The helical transmembrane segment at 424–444 (FVVNVFVVAWVLVVGFGLGGW) threads the bilayer. Residues 445–482 (ASVTNFIKQIDTFGLFAKCYQCPPRAHAGAPLPAPPRH) lie on the Extracellular side of the membrane.

This sequence belongs to the amino acid/polyamine transporter 2 family. Amino acid/auxin permease (AAAP) (TC 2.A.18.1) subfamily.

It is found in the cell membrane. Its function is as follows. Carrier protein involved in proton-driven auxin influx. May mediate the formation of auxin gradient from developing leaves (site of auxin biosynthesis) to tips. This chain is Auxin transporter-like protein 2, found in Oryza sativa subsp. japonica (Rice).